A 492-amino-acid polypeptide reads, in one-letter code: N-succinylglutamate 5-semialdehyde dehydrogenase (492 aa).

Residue 220–225 coordinates NAD(+); that stretch reads GSANTG. Catalysis depends on residues Glu243 and Cys277.

It belongs to the aldehyde dehydrogenase family. AstD subfamily.

The enzyme catalyses N-succinyl-L-glutamate 5-semialdehyde + NAD(+) + H2O = N-succinyl-L-glutamate + NADH + 2 H(+). The protein operates within amino-acid degradation; L-arginine degradation via AST pathway; L-glutamate and succinate from L-arginine: step 4/5. In terms of biological role, catalyzes the NAD-dependent reduction of succinylglutamate semialdehyde into succinylglutamate. This is N-succinylglutamate 5-semialdehyde dehydrogenase from Escherichia coli (strain SE11).